We begin with the raw amino-acid sequence, 202 residues long: Small ribosomal subunit protein uS4c (202 aa).

The S4 RNA-binding domain maps to Met90 to Gly148.

The protein belongs to the universal ribosomal protein uS4 family. Part of the 30S ribosomal subunit. Contacts protein S5. The interaction surface between S4 and S5 is involved in control of translational fidelity.

It is found in the plastid. It localises to the chloroplast. One of the primary rRNA binding proteins, it binds directly to 16S rRNA where it nucleates assembly of the body of the 30S subunit. Functionally, with S5 and S12 plays an important role in translational accuracy. In Haplomitrium hookeri (Hooker's flapwort), this protein is Small ribosomal subunit protein uS4c (rps4).